The sequence spans 329 residues: Probable carboxylesterase 13 (329 aa).

Met1 is modified (N-acetylmethionine). The Involved in the stabilization of the negatively charged intermediate by the formation of the oxyanion hole signature appears at 81 to 83 (HGG). Catalysis depends on residues Ser165, Asp269, and His302.

This sequence belongs to the 'GDXG' lipolytic enzyme family. As to expression, expressed in flowers.

It carries out the reaction a carboxylic ester + H2O = an alcohol + a carboxylate + H(+). Its function is as follows. Carboxylesterase acting on esters with varying acyl chain length. The protein is Probable carboxylesterase 13 (CXE13) of Arabidopsis thaliana (Mouse-ear cress).